Reading from the N-terminus, the 535-residue chain is Probable acyl-activating enzyme 22 (535 aa).

It belongs to the ATP-dependent AMP-binding enzyme family.

Its function is as follows. May act as an acid--thiol ligase that activates carboxylic acids by forming acyl-CoAs. The protein is Probable acyl-activating enzyme 22 (AEE22) of Arabidopsis thaliana (Mouse-ear cress).